The chain runs to 329 residues: NAD(P)H-dependent D-xylose reductase (329 aa).

Tyr-52 functions as the Proton donor in the catalytic mechanism. Residue His-114 participates in substrate binding. NAD(+) contacts are provided by residues 173-174 (SN), 222-231 (SSFGPVSFLE), and 278-288 (KSSKKERLLDN).

This sequence belongs to the aldo/keto reductase family.

The enzyme catalyses xylitol + NAD(+) = D-xylose + NADH + H(+). It catalyses the reaction xylitol + NADP(+) = D-xylose + NADPH + H(+). Its pathway is carbohydrate metabolism; D-xylose degradation. Its function is as follows. Reduces D-xylose into xylitol. This Kluyveromyces lactis (strain ATCC 8585 / CBS 2359 / DSM 70799 / NBRC 1267 / NRRL Y-1140 / WM37) (Yeast) protein is NAD(P)H-dependent D-xylose reductase (XYL1).